Here is a 282-residue protein sequence, read N- to C-terminus: Aldo-keto reductase MT3049 (282 aa).

The Proton donor role is filled by Tyr57. NADPH contacts are provided by Leu197, Val235, Arg237, Ser238, Ala239, Arg243, Ser246, Asn247, and Arg273.

This sequence belongs to the aldo/keto reductase family.

This Mycobacterium tuberculosis (strain CDC 1551 / Oshkosh) protein is Aldo-keto reductase MT3049.